Reading from the N-terminus, the 371-residue chain is tRNA-specific 2-thiouridylase MnmA (371 aa).

ATP is bound by residues 14–21 (GMSGGVDS) and methionine 40. The interaction with target base in tRNA stretch occupies residues 100–102 (NPD). The Nucleophile role is filled by cysteine 105. A disulfide bridge connects residues cysteine 105 and cysteine 201. Glycine 129 lines the ATP pocket. Positions 151-153 (KDQ) are interaction with tRNA. The Cysteine persulfide intermediate role is filled by cysteine 201. The interval 309-310 (RY) is interaction with tRNA.

The protein belongs to the MnmA/TRMU family.

Its subcellular location is the cytoplasm. The catalysed reaction is S-sulfanyl-L-cysteinyl-[protein] + uridine(34) in tRNA + AH2 + ATP = 2-thiouridine(34) in tRNA + L-cysteinyl-[protein] + A + AMP + diphosphate + H(+). Its function is as follows. Catalyzes the 2-thiolation of uridine at the wobble position (U34) of tRNA, leading to the formation of s(2)U34. The chain is tRNA-specific 2-thiouridylase MnmA from Halalkalibacterium halodurans (strain ATCC BAA-125 / DSM 18197 / FERM 7344 / JCM 9153 / C-125) (Bacillus halodurans).